The following is an 833-amino-acid chain: DNA polymerase I, thermostable (833 aa).

Residues 173–267 (VPPERWVDFR…FKALRRRTPD (95 aa)) enclose the 5'-3' exonuclease domain. Residues 412 to 833 (ERLFQNLFPR…GRDWLEAKQD (422 aa)) form a polymerase region.

It belongs to the DNA polymerase type-A family.

The catalysed reaction is DNA(n) + a 2'-deoxyribonucleoside 5'-triphosphate = DNA(n+1) + diphosphate. In terms of biological role, in addition to polymerase activity, this DNA polymerase exhibits 5'-3' exonuclease activity. Unlikely to have 3'-5' exonuclease activity due to absence of a 3'-5' exonuclease domain. The protein is DNA polymerase I, thermostable (polA) of Thermus filiformis.